We begin with the raw amino-acid sequence, 158 residues long: Single-stranded DNA-binding protein 2 (158 aa).

Residues 1–107 enclose the SSB domain; that stretch reads MNETIVCVVG…IDALAVGHDL (107 aa). The interval 109 to 158 is disordered; sequence RGTSAFRRPSAKDGEAGVSPAARPEPNWETEPGSQPSVEHQPQPEPAGVT.

In terms of assembly, homotetramer.

The protein is Single-stranded DNA-binding protein 2 (ssb2) of Streptomyces avermitilis (strain ATCC 31267 / DSM 46492 / JCM 5070 / NBRC 14893 / NCIMB 12804 / NRRL 8165 / MA-4680).